The sequence spans 373 residues: Chaperone protein DnaJ (373 aa).

The 66-residue stretch at 4 to 69 (SYYEILEITQ…EKRAIYDRYG (66 aa)) folds into the J domain. Residues 135 to 212 (GCKKNIDFTY…CKGLGYNESK (78 aa)) form a CR-type zinc finger. Zn(2+) contacts are provided by Cys-148, Cys-151, Cys-164, Cys-167, Cys-186, Cys-189, Cys-200, and Cys-203. CXXCXGXG motif repeat units follow at residues 148–155 (CKTCNGTG), 164–171 (CPKCQGRG), 186–193 (CPDCQGIG), and 200–207 (CSDCKGLG).

The protein belongs to the DnaJ family. As to quaternary structure, homodimer. The cofactor is Zn(2+).

It localises to the cytoplasm. In terms of biological role, participates actively in the response to hyperosmotic and heat shock by preventing the aggregation of stress-denatured proteins and by disaggregating proteins, also in an autonomous, DnaK-independent fashion. Unfolded proteins bind initially to DnaJ; upon interaction with the DnaJ-bound protein, DnaK hydrolyzes its bound ATP, resulting in the formation of a stable complex. GrpE releases ADP from DnaK; ATP binding to DnaK triggers the release of the substrate protein, thus completing the reaction cycle. Several rounds of ATP-dependent interactions between DnaJ, DnaK and GrpE are required for fully efficient folding. Also involved, together with DnaK and GrpE, in the DNA replication of plasmids through activation of initiation proteins. This is Chaperone protein DnaJ from Campylobacter jejuni (strain RM1221).